Reading from the N-terminus, the 265-residue chain is Deoxyribose-phosphate aldolase 2 (265 aa).

Asp-108 functions as the Proton donor/acceptor in the catalytic mechanism. Lys-173 acts as the Schiff-base intermediate with acetaldehyde in catalysis. The Proton donor/acceptor role is filled by Lys-207.

The protein belongs to the DeoC/FbaB aldolase family. DeoC type 2 subfamily.

The protein resides in the cytoplasm. The catalysed reaction is 2-deoxy-D-ribose 5-phosphate = D-glyceraldehyde 3-phosphate + acetaldehyde. It participates in carbohydrate degradation; 2-deoxy-D-ribose 1-phosphate degradation; D-glyceraldehyde 3-phosphate and acetaldehyde from 2-deoxy-alpha-D-ribose 1-phosphate: step 2/2. Its function is as follows. Catalyzes a reversible aldol reaction between acetaldehyde and D-glyceraldehyde 3-phosphate to generate 2-deoxy-D-ribose 5-phosphate. This chain is Deoxyribose-phosphate aldolase 2 (deoC2), found in Yersinia pestis.